A 363-amino-acid chain; its full sequence is tRNA/tmRNA (uracil-C(5))-methyltransferase (363 aa).

Gln187, Tyr215, Asn220, Glu236, and Asp296 together coordinate S-adenosyl-L-methionine. Cys321 functions as the Nucleophile in the catalytic mechanism. Glu355 (proton acceptor) is an active-site residue.

Belongs to the class I-like SAM-binding methyltransferase superfamily. RNA M5U methyltransferase family. TrmA subfamily.

It catalyses the reaction uridine(54) in tRNA + S-adenosyl-L-methionine = 5-methyluridine(54) in tRNA + S-adenosyl-L-homocysteine + H(+). The catalysed reaction is uridine(341) in tmRNA + S-adenosyl-L-methionine = 5-methyluridine(341) in tmRNA + S-adenosyl-L-homocysteine + H(+). Functionally, dual-specificity methyltransferase that catalyzes the formation of 5-methyluridine at position 54 (m5U54) in all tRNAs, and that of position 341 (m5U341) in tmRNA (transfer-mRNA). This Pseudomonas aeruginosa (strain ATCC 15692 / DSM 22644 / CIP 104116 / JCM 14847 / LMG 12228 / 1C / PRS 101 / PAO1) protein is tRNA/tmRNA (uracil-C(5))-methyltransferase.